The chain runs to 217 residues: Zinc finger CCHC-type and RNA-binding motif-containing protein 1 (217 aa).

Residues 10-88 (STVYVSNLPF…RVIKASIAID (79 aa)) form the RRM domain. The segment at 105–122 (SKCYECGESGHLSYACPK) adopts a CCHC-type zinc-finger fold. A disordered region spans residues 120-217 (CPKNMLGERE…YFSDEEELSD (98 aa)). Residues 145-163 (PEEEIEEVEVSEEEGEDPA) are compositionally biased toward acidic residues. Phosphoserine occurs at positions 155, 210, and 216.

In terms of assembly, component of the U11/U12 snRNPs that are part of the U12-type spliceosome. Interacts with ZRSR1.

It localises to the nucleus. The protein localises to the nucleoplasm. The polypeptide is Zinc finger CCHC-type and RNA-binding motif-containing protein 1 (Zcrb1) (Rattus norvegicus (Rat)).